The sequence spans 141 residues: Large ribosomal subunit protein uL11 (141 aa).

The protein belongs to the universal ribosomal protein uL11 family. In terms of assembly, part of the ribosomal stalk of the 50S ribosomal subunit. Interacts with L10 and the large rRNA to form the base of the stalk. L10 forms an elongated spine to which L12 dimers bind in a sequential fashion forming a multimeric L10(L12)X complex. One or more lysine residues are methylated.

Functionally, forms part of the ribosomal stalk which helps the ribosome interact with GTP-bound translation factors. The chain is Large ribosomal subunit protein uL11 from Chlamydia felis (strain Fe/C-56) (Chlamydophila felis).